A 187-amino-acid chain; its full sequence is MILASGSPRRRDLLANLGVPFRVVVSGEAEDRPERDPARLAGELATLKARAVAQSHPDAVVIAADTVVALGEELLGKPADEAENWAFVRRLAGRTHQVYTGVTVLSGGQESGGVERTDVTFRALTDGEIAHYARTGEGLDKAGGYGIQGVGMALVARIDGDYSNVVGFPLTLVIRLLRGAGVAVWGE.

The active-site Proton acceptor is Asp-65.

Belongs to the Maf family. YhdE subfamily. A divalent metal cation serves as cofactor.

It localises to the cytoplasm. It catalyses the reaction dTTP + H2O = dTMP + diphosphate + H(+). It carries out the reaction UTP + H2O = UMP + diphosphate + H(+). In terms of biological role, nucleoside triphosphate pyrophosphatase that hydrolyzes dTTP and UTP. May have a dual role in cell division arrest and in preventing the incorporation of modified nucleotides into cellular nucleic acids. This Deinococcus geothermalis (strain DSM 11300 / CIP 105573 / AG-3a) protein is dTTP/UTP pyrophosphatase.